The primary structure comprises 85 residues: U5-theraphotoxin-Hhn1a (85 aa).

The signal sequence occupies residues 1–21 (MKSQIFFAVAALFLLTVRTYA). Residues 22 to 49 (SKSKEQDLRDALFSAMFSADNQLNPQER) constitute a propeptide that is removed on maturation. 3 disulfides stabilise this stretch: Cys-51/Cys-65, Cys-58/Cys-70, and Cys-64/Cys-77.

It belongs to the neurotoxin 10 (Hwtx-1) family. 18 (Hntx-VII) subfamily. In terms of tissue distribution, expressed by the venom gland.

It localises to the secreted. Ion channel impairing toxin that inhibits voltage-gated sodium channels. The recombinantly expressed toxin shows a weak activity against Nav1.7/SCN9A, and shifts the voltage dependence of channel activation to more depolarized potentials. The chain is U5-theraphotoxin-Hhn1a from Cyriopagopus hainanus (Chinese bird spider).